The sequence spans 209 residues: Pyridoxine/pyridoxamine 5'-phosphate oxidase (209 aa).

Residues 7-10 and Lys-64 contribute to the substrate site; that span reads REDY. Residues 59–64, 74–75, Arg-80, and Lys-81 contribute to the FMN site; these read RIVLLK and FT. Substrate is bound by residues Tyr-121, Arg-125, and Ser-129. FMN contacts are provided by residues 138–139 and Trp-182; that span reads QS. 188-190 contributes to the substrate binding site; the sequence is RLH. Arg-192 contributes to the FMN binding site.

It belongs to the pyridoxamine 5'-phosphate oxidase family. As to quaternary structure, homodimer. The cofactor is FMN.

It carries out the reaction pyridoxamine 5'-phosphate + O2 + H2O = pyridoxal 5'-phosphate + H2O2 + NH4(+). The enzyme catalyses pyridoxine 5'-phosphate + O2 = pyridoxal 5'-phosphate + H2O2. Its pathway is cofactor metabolism; pyridoxal 5'-phosphate salvage; pyridoxal 5'-phosphate from pyridoxamine 5'-phosphate: step 1/1. It participates in cofactor metabolism; pyridoxal 5'-phosphate salvage; pyridoxal 5'-phosphate from pyridoxine 5'-phosphate: step 1/1. Catalyzes the oxidation of either pyridoxine 5'-phosphate (PNP) or pyridoxamine 5'-phosphate (PMP) into pyridoxal 5'-phosphate (PLP). This chain is Pyridoxine/pyridoxamine 5'-phosphate oxidase, found in Actinobacillus pleuropneumoniae serotype 7 (strain AP76).